A 474-amino-acid polypeptide reads, in one-letter code: MRVAIAGAGLAGLSCAKYLADAGHTPIVYERRDVLGGKVAAWKDEDGDWYETGLHIFFGAYPNMLQLFKELNIEDRLQWKSHSMIFNQPTKPGTYSRFDFPDIPAPINGVAAILSNNDMLTWEEKIKFGLGLLPAMIRGQSYVEEMDQYSWTEWLRKQNIPERVNDEVFIAMAKALNFIDPDEISATVVLTALNRFLQEKKGSMMAFLDGAPPERLCQPIVEHVQARGGDVLLNAPLKEFVLNDDSSVQAFRIAGIKGQEEQLIEADAYVSALPVDPLKLLLPDAWKAMPYFQQLDGLQGVPVINIHLWFDRKLTDIDHLLFSRSPLLSVYADMSNTCREYEDPDRSMLELVFAPAKDWIGRSDEDILAATMAEIEKLFPQHFSGENPARLRKYKIVKTPLSVYKATPGRQQYRPDQASPIANFFLTGDYTMQRYLASMEGAVLSGKLTAQAIIARQDELQRRSSGRPLAASQA.

This sequence belongs to the carotenoid/retinoid oxidoreductase family.

It is found in the cell membrane. The enzyme catalyses 2 a plastoquinone + 15-cis-phytoene = 9,9',15-tri-cis-zeta-carotene + 2 a plastoquinol. Its pathway is carotenoid biosynthesis; lycopene biosynthesis. Inhibited by the herbicide norflurazon in a non-competitive way. Its function is as follows. This enzyme converts phytoene into zeta-carotene via the intermediary of phytofluene by the symmetrical introduction of two double bonds at the C-11 and C-11' positions of phytoene. Also active with phytofluene and 1,2-epoxyphytoene as substrates. This chain is 15-cis-phytoene desaturase (pds), found in Synechococcus elongatus (strain ATCC 33912 / PCC 7942 / FACHB-805) (Anacystis nidulans R2).